Reading from the N-terminus, the 310-residue chain is UDP-N-acetylenolpyruvoylglucosamine reductase (310 aa).

Residues 34 to 211 (TGGPAQCVYV…REDMGKIAQE (178 aa)) form the FAD-binding PCMH-type domain. Arg177 is an active-site residue. Ser225 acts as the Proton donor in catalysis. Glu295 is an active-site residue.

The protein belongs to the MurB family. The cofactor is FAD.

It localises to the cytoplasm. It carries out the reaction UDP-N-acetyl-alpha-D-muramate + NADP(+) = UDP-N-acetyl-3-O-(1-carboxyvinyl)-alpha-D-glucosamine + NADPH + H(+). It functions in the pathway cell wall biogenesis; peptidoglycan biosynthesis. Functionally, cell wall formation. The polypeptide is UDP-N-acetylenolpyruvoylglucosamine reductase (Beijerinckia indica subsp. indica (strain ATCC 9039 / DSM 1715 / NCIMB 8712)).